A 170-amino-acid chain; its full sequence is NADH-quinone oxidoreductase subunit B (170 aa).

Residues cysteine 37, cysteine 38, cysteine 102, and cysteine 131 each coordinate [4Fe-4S] cluster.

The protein belongs to the complex I 20 kDa subunit family. As to quaternary structure, NDH-1 is composed of 14 different subunits. Subunits NuoB, C, D, E, F, and G constitute the peripheral sector of the complex. [4Fe-4S] cluster serves as cofactor.

It localises to the cell inner membrane. It carries out the reaction a quinone + NADH + 5 H(+)(in) = a quinol + NAD(+) + 4 H(+)(out). Functionally, NDH-1 shuttles electrons from NADH, via FMN and iron-sulfur (Fe-S) centers, to quinones in the respiratory chain. The immediate electron acceptor for the enzyme in this species is believed to be ubiquinone. Couples the redox reaction to proton translocation (for every two electrons transferred, four hydrogen ions are translocated across the cytoplasmic membrane), and thus conserves the redox energy in a proton gradient. The polypeptide is NADH-quinone oxidoreductase subunit B (Geobacter sulfurreducens (strain ATCC 51573 / DSM 12127 / PCA)).